We begin with the raw amino-acid sequence, 290 residues long: 4-hydroxybenzoate octaprenyltransferase (290 aa).

A run of 8 helical transmembrane segments spans residues 23–43, 46–66, 99–119, 141–161, 170–190, 213–233, 234–254, and 268–288; these read IGTLLLLWPTLWALWLAGKGV, LSILVVFVVGVFLMRAAGCVV, LFVVLVLVSFGLVLTLNAMTI, LPQFVLGAAFGWGIPMAYAAV, WLLLLANICWTVAYDTLYAMV, LIVGLLQFATLLLMLWVGYLT, QMSGAFYWSLLLAGALFIHQQ, and AFMDNNYVGLVLFIGIALSYW.

The protein belongs to the UbiA prenyltransferase family. Mg(2+) is required as a cofactor.

Its subcellular location is the cell inner membrane. It catalyses the reaction all-trans-octaprenyl diphosphate + 4-hydroxybenzoate = 4-hydroxy-3-(all-trans-octaprenyl)benzoate + diphosphate. Its pathway is cofactor biosynthesis; ubiquinone biosynthesis. In terms of biological role, catalyzes the prenylation of para-hydroxybenzoate (PHB) with an all-trans polyprenyl group. Mediates the second step in the final reaction sequence of ubiquinone-8 (UQ-8) biosynthesis, which is the condensation of the polyisoprenoid side chain with PHB, generating the first membrane-bound Q intermediate 3-octaprenyl-4-hydroxybenzoate. The protein is 4-hydroxybenzoate octaprenyltransferase of Serratia proteamaculans (strain 568).